Reading from the N-terminus, the 156-residue chain is uncharacterized protein (156 aa).

This is an uncharacterized protein from Bacillus subtilis (strain 168).